The following is a 267-amino-acid chain: Protein isy-1 (267 aa).

A coiled-coil region spans residues 175–204 (LEKLIEEKNIERINKEFAEKQAQKQQTASD). The segment at 195 to 221 (QAQKQQTASDAAPENIYKVEEDDDDDL) is disordered.

The protein belongs to the ISY1 family. In terms of tissue distribution, ubiquitously expressed.

Its subcellular location is the nucleus. Regulates the processing of the mir-60 microRNA (miRNA), which in turn negatively regulates the expression of the transcription factor zip-10. Does not affect the splicing of zip-10. In Caenorhabditis elegans, this protein is Protein isy-1.